The chain runs to 185 residues: GTP cyclohydrolase 1 (185 aa).

Residues Cys-76, His-79, and Cys-147 each coordinate Zn(2+).

This sequence belongs to the GTP cyclohydrolase I family. As to quaternary structure, toroid-shaped homodecamer, composed of two pentamers of five dimers.

The catalysed reaction is GTP + H2O = 7,8-dihydroneopterin 3'-triphosphate + formate + H(+). The protein operates within cofactor biosynthesis; 7,8-dihydroneopterin triphosphate biosynthesis; 7,8-dihydroneopterin triphosphate from GTP: step 1/1. This is GTP cyclohydrolase 1 from Clostridium perfringens (strain ATCC 13124 / DSM 756 / JCM 1290 / NCIMB 6125 / NCTC 8237 / Type A).